The chain runs to 397 residues: Phosphoglycerate kinase (397 aa).

Substrate contacts are provided by residues Asp25 to Asn27, Arg41, His64 to Arg67, Arg118, and Arg151. ATP is bound by residues Lys202, Glu324, and Gly350–Thr353.

Belongs to the phosphoglycerate kinase family. In terms of assembly, monomer.

The protein localises to the cytoplasm. The enzyme catalyses (2R)-3-phosphoglycerate + ATP = (2R)-3-phospho-glyceroyl phosphate + ADP. It functions in the pathway carbohydrate degradation; glycolysis; pyruvate from D-glyceraldehyde 3-phosphate: step 2/5. The chain is Phosphoglycerate kinase from Acidovorax sp. (strain JS42).